A 399-amino-acid polypeptide reads, in one-letter code: MDPPSLMSDGSSWSKLPLDLLIMVFERLGFVDFQRTKSVCLAWLYASRMSAPNKQIPWLIMFPEKGKDFCLLFNSEEKEKIYRIQNLGVEFANSHCLAIYGSWLFMRDPRYKLYIMNLFTRERINLPSVESQFGRIKIEQINDDLFYRKVDDEYDYHPKRHMIDISDHILWIDDKTKDYVVMWSFECGYTYMVYCRTGDNIWNYRSLDISTVNIVYKDHKMYLYSYTRDVKVLDFCEDIPRQIFETQVNYDILMEKGFRSDVDDVLNDKKEHLVVTLNGDVLRVKSKIWDNSDVWSFCIYKLNSSNTYWEKLTSLGDEAILLDLGITVLANTIEGINRNSIYFSGYHRPHYFRFDHVWSEKDICVFNLDTQEVERPHQSICSSIQISGARWFVPNFKHI.

The F-box domain occupies 12 to 48 (SWSKLPLDLLIMVFERLGFVDFQRTKSVCLAWLYASR).

The polypeptide is Probable F-box protein At4g22060 (Arabidopsis thaliana (Mouse-ear cress)).